A 96-amino-acid chain; its full sequence is Large ribosomal subunit protein bL27 (96 aa).

A propeptide spanning residues 1–9 (MLNMNLQLL) is cleaved from the precursor.

Belongs to the bacterial ribosomal protein bL27 family. Post-translationally, the N-terminus is cleaved by ribosomal processing cysteine protease Prp.

The polypeptide is Large ribosomal subunit protein bL27 (Clostridioides difficile (strain 630) (Peptoclostridium difficile)).